Reading from the N-terminus, the 334-residue chain is Putative heat shock protein HSP 90-alpha A5 (334 aa).

Residues 55–107 (KRNKQVSDAEAEKKEDKRKKKKESNDKPEIEDVGSDEEEEKKDADKKKKKSKE) form a disordered region. Residues 59 to 69 (QVSDAEAEKKE) are compositionally biased toward basic and acidic residues. The segment covering 85–94 (EDVGSDEEEE) has biased composition (acidic residues). Serine 89 is subject to Phosphoserine. Residues 234–267 (LELPEDEEEKKKQEEKKTKFENLCKIMKDMLEKK) are a coiled coil. The disordered stretch occupies residues 314-334 (EMPPLRGGDDTSRMEEVGGSG). The span at 320-334 (GGDDTSRMEEVGGSG) shows a compositional bias: basic and acidic residues. Residues 327–331 (MEEVG) carry the TPR repeat-binding motif.

The protein belongs to the heat shock protein 90 family. As to quaternary structure, homodimer.

The protein resides in the cytoplasm. Putative molecular chaperone that may promote the maturation, structural maintenance and proper regulation of specific target proteins. This chain is Putative heat shock protein HSP 90-alpha A5 (HSP90AA5P), found in Homo sapiens (Human).